The sequence spans 142 residues: Large ribosomal subunit protein uL11 (142 aa).

It belongs to the universal ribosomal protein uL11 family. Part of the ribosomal stalk of the 50S ribosomal subunit. Interacts with L10 and the large rRNA to form the base of the stalk. L10 forms an elongated spine to which L12 dimers bind in a sequential fashion forming a multimeric L10(L12)X complex. In terms of processing, one or more lysine residues are methylated.

Forms part of the ribosomal stalk which helps the ribosome interact with GTP-bound translation factors. The sequence is that of Large ribosomal subunit protein uL11 from Xanthomonas oryzae pv. oryzae (strain MAFF 311018).